The sequence spans 238 residues: Urease accessory protein UreG (238 aa).

The span at 1-15 (MPPHLIDGEPHDHAH) shows a compositional bias: basic and acidic residues. Positions 1-27 (MPPHLIDGEPHDHAHDRPKRQRTPGEP) are disordered. Residue 34-41 (GPVGSGKT) participates in GTP binding.

Belongs to the SIMIBI class G3E GTPase family. UreG subfamily. Homodimer. UreD, UreF and UreG form a complex that acts as a GTP-hydrolysis-dependent molecular chaperone, activating the urease apoprotein by helping to assemble the nickel containing metallocenter of UreC. The UreE protein probably delivers the nickel.

The protein localises to the cytoplasm. In terms of biological role, facilitates the functional incorporation of the urease nickel metallocenter. This process requires GTP hydrolysis, probably effectuated by UreG. The sequence is that of Urease accessory protein UreG from Nocardia farcinica (strain IFM 10152).